Here is a 345-residue protein sequence, read N- to C-terminus: N-malonyltransferase FDB2 (345 aa).

Cys110 acts as the Acyl-thioester intermediate in catalysis. The Proton acceptor role is filled by His158. The active site involves Asp173.

It belongs to the arylamine N-acetyltransferase family.

It participates in xenobiotic degradation. N-malonyltransferase; part of the Fusarium detoxification of benzoxazolinone cluster 2 (FDB2) involved in the degradation of benzoxazolinones produced by the host plant. Maize, wheat, and rye produce the 2 benzoxazinone phytoanticipins 2,4-dihy-droxy-7-methoxy-1,4-benzoxazin-3-one (DIMBOA) and 2,4-dihydroxy-1,4-benzoxazin-3-one (DIBOA) that, due to their inherent instability once released, spontaneously degrade to the more stable corresponding benzoxazolinones, 6-methoxy-2-benzoxazolinone (MBOA) and 2-benzoxazolinone (BOA), respectively. The first step in the detoxification of benzoxazolinones involves the hydrolysis of the cyclic ester bond of benzoxazolinones by the FDB1 cluster gamma-lactamase MBL1 to aminophenols. MBL1 is able to convert BOA into 2-aminophenol (2-AP), as well as MBOA into 5-methoxy-2-aminophenol (2-AMP). The FDB2 cluster N-malonyltransferase FDB2/NAT1 then metabolizes aminophenols via N-malonylation to non-toxic malonamic acids. FDB2/NAT1 converts 2-AP into N-(2-hydroxyphenyl) malonamic acid (HPMA) and 2-AMP into N-(2-hydroxy-4-methoxyphenyl) malonamic acid (HMPMA). The duplicated dienlactone hydrolases DLH1 and DLH2 may provide redundant function for hydrolyzing the lactone moiety in the BOA molecule. The roles of the amidases an other enzymes encoded by the 2 FDB clusters have not been identified so far. This is N-malonyltransferase FDB2 from Gibberella moniliformis (strain M3125 / FGSC 7600) (Maize ear and stalk rot fungus).